Consider the following 367-residue polypeptide: Molybdopterin synthase catalytic subunit (367 aa).

Substrate-binding positions include 101 to 102, K117, and 124 to 126; these read HR and KKE.

Belongs to the MoaE family. MOCS2B subfamily. As to quaternary structure, heterotetramer; composed of 2 small (Mocs2A) and 2 large (Mocs2B) subunits.

The protein resides in the cytoplasm. It catalyses the reaction 2 [molybdopterin-synthase sulfur-carrier protein]-C-terminal-Gly-aminoethanethioate + cyclic pyranopterin phosphate + H2O = molybdopterin + 2 [molybdopterin-synthase sulfur-carrier protein]-C-terminal Gly-Gly + 2 H(+). Its pathway is cofactor biosynthesis; molybdopterin biosynthesis. Functionally, catalytic subunit of the molybdopterin synthase complex, a complex that catalyzes the conversion of precursor Z into molybdopterin. Acts by mediating the incorporation of 2 sulfur atoms from thiocarboxylated Mocs2A into precursor Z to generate a dithiolene group. This Drosophila erecta (Fruit fly) protein is Molybdopterin synthase catalytic subunit.